We begin with the raw amino-acid sequence, 339 residues long: N-acetyl-gamma-glutamyl-phosphate reductase 1 (339 aa).

Cys-149 is a catalytic residue.

Belongs to the NAGSA dehydrogenase family. Type 1 subfamily.

The protein localises to the cytoplasm. It carries out the reaction N-acetyl-L-glutamate 5-semialdehyde + phosphate + NADP(+) = N-acetyl-L-glutamyl 5-phosphate + NADPH + H(+). Its pathway is amino-acid biosynthesis; L-arginine biosynthesis; N(2)-acetyl-L-ornithine from L-glutamate: step 3/4. Its function is as follows. Catalyzes the NADPH-dependent reduction of N-acetyl-5-glutamyl phosphate to yield N-acetyl-L-glutamate 5-semialdehyde. The polypeptide is N-acetyl-gamma-glutamyl-phosphate reductase 1 (Lactiplantibacillus plantarum (strain ATCC BAA-793 / NCIMB 8826 / WCFS1) (Lactobacillus plantarum)).